Here is a 152-residue protein sequence, read N- to C-terminus: Small ribosomal subunit protein uS11 (152 aa).

The protein belongs to the universal ribosomal protein uS11 family. Component of the small ribosomal subunit. Part of the small subunit (SSU) processome, composed of more than 70 proteins and the RNA chaperone small nucleolar RNA (snoRNA) U3.

Its subcellular location is the cytoplasm. The protein localises to the nucleus. It localises to the nucleolus. Component of the small ribosomal subunit. The ribosome is a large ribonucleoprotein complex responsible for the synthesis of proteins in the cell. Part of the small subunit (SSU) processome, first precursor of the small eukaryotic ribosomal subunit. During the assembly of the SSU processome in the nucleolus, many ribosome biogenesis factors, an RNA chaperone and ribosomal proteins associate with the nascent pre-rRNA and work in concert to generate RNA folding, modifications, rearrangements and cleavage as well as targeted degradation of pre-ribosomal RNA by the RNA exosome. The sequence is that of Small ribosomal subunit protein uS11 (rps-14) from Caenorhabditis elegans.